A 308-amino-acid polypeptide reads, in one-letter code: MIRHSTSTQVAAPLGAYLQVTKPGIIMGNLIAVVGGFLLAARGEVDAVLMLATLVGLSLVVASGCAINNYIDRDIDAKMQRTCRRATVTGAIPLKQVLGLGIALGVLGFGLLAWFTNLAALLFAAFGYLVYVGLYSLYMKRNSVYGTLVGSLSGAVPPVVGYCAVTGRMDGAALILLAMFSLWQMPHSYAIAIFRFKDYEAANIPVLPVAQGVEKAKLHIVFYIALFALVSTLLPLAGYTGVGFMAVSCVTSFWWLLMALKGYRSDVNLLRWSRQVFGFSILTIAILSLTMALDFQVAGQAPLLAMLG.

9 consecutive transmembrane segments (helical) span residues 20 to 40 (VTKPGIIMGNLIAVVGGFLLA), 47 to 67 (AVLMLATLVGLSLVVASGCAI), 92 to 114 (IPLKQVLGLGIALGVLGFGLLAW), 118 to 137 (LAALLFAAFGYLVYVGLYSL), 144 to 164 (VYGTLVGSLSGAVPPVVGYCA), 174 to 194 (LILLAMFSLWQMPHSYAIAIF), 218 to 238 (LHIVFYIALFALVSTLLPLAG), 240 to 260 (TGVGFMAVSCVTSFWWLLMAL), and 275 to 295 (QVFGFSILTIAILSLTMALDF).

This sequence belongs to the UbiA prenyltransferase family. Protoheme IX farnesyltransferase subfamily.

The protein localises to the cell inner membrane. It carries out the reaction heme b + (2E,6E)-farnesyl diphosphate + H2O = Fe(II)-heme o + diphosphate. The protein operates within porphyrin-containing compound metabolism; heme O biosynthesis; heme O from protoheme: step 1/1. Converts heme B (protoheme IX) to heme O by substitution of the vinyl group on carbon 2 of heme B porphyrin ring with a hydroxyethyl farnesyl side group. The protein is Protoheme IX farnesyltransferase 2 of Shewanella loihica (strain ATCC BAA-1088 / PV-4).